Reading from the N-terminus, the 59-residue chain is Large ribosomal subunit protein uL30 (59 aa).

This sequence belongs to the universal ribosomal protein uL30 family. In terms of assembly, part of the 50S ribosomal subunit.

The protein is Large ribosomal subunit protein uL30 of Alkaliphilus oremlandii (strain OhILAs) (Clostridium oremlandii (strain OhILAs)).